The chain runs to 561 residues: Acylcarnitine hydrolase (561 aa).

The signal sequence occupies residues Met-1–Gly-26. Residues Cys-97 and Cys-125 are joined by a disulfide bond. Ser-230 serves as the catalytic Acyl-ester intermediate. A disulfide bridge links Cys-282 with Cys-293. Catalysis depends on charge relay system residues Glu-347 and His-459. Residues His-558–Leu-561 carry the Prevents secretion from ER motif.

It belongs to the type-B carboxylesterase/lipase family. Detected in liver (at protein level).

The protein resides in the microsome. Its subcellular location is the endoplasmic reticulum. The enzyme catalyses an O-acyl-(R)-carnitine + H2O = (R)-carnitine + a fatty acid + H(+). It carries out the reaction all-trans-retinyl hexadecanoate + H2O = all-trans-retinol + hexadecanoate + H(+). In terms of biological role, hydrolase with high activity towards palmitoylcarnitine. Is also active with p-nitrophenylacetate and alpha-naphthylacetate. May also hydrolyze retinyl esters. The chain is Acylcarnitine hydrolase from Mus musculus (Mouse).